The sequence spans 416 residues: Peptide chain release factor subunit 1 (416 aa).

It belongs to the eukaryotic release factor 1 family. In terms of assembly, heterodimer of two subunits, one of which binds GTP.

Its subcellular location is the cytoplasm. Its function is as follows. Directs the termination of nascent peptide synthesis (translation) in response to the termination codons UAA, UAG and UGA. The polypeptide is Peptide chain release factor subunit 1 (Halorubrum lacusprofundi (strain ATCC 49239 / DSM 5036 / JCM 8891 / ACAM 34)).